Reading from the N-terminus, the 330-residue chain is NADH-quinone oxidoreductase subunit H (330 aa).

Transmembrane regions (helical) follow at residues 5–25, 78–98, 120–140, 155–175, 191–211, 243–263, 271–291, and 308–328; these read LLTL…VLTL, WVFM…FAVI, IGLL…ALGG, AMAQ…PVVM, SLPN…AIMA, FFVG…VLFL, LPGI…FIWV, and WKIL…WLIW.

This sequence belongs to the complex I subunit 1 family. As to quaternary structure, NDH-1 is composed of 14 different subunits. Subunits NuoA, H, J, K, L, M, N constitute the membrane sector of the complex.

Its subcellular location is the cell inner membrane. It carries out the reaction a quinone + NADH + 5 H(+)(in) = a quinol + NAD(+) + 4 H(+)(out). Functionally, NDH-1 shuttles electrons from NADH, via FMN and iron-sulfur (Fe-S) centers, to quinones in the respiratory chain. The immediate electron acceptor for the enzyme in this species is believed to be ubiquinone. Couples the redox reaction to proton translocation (for every two electrons transferred, four hydrogen ions are translocated across the cytoplasmic membrane), and thus conserves the redox energy in a proton gradient. This subunit may bind ubiquinone. The protein is NADH-quinone oxidoreductase subunit H of Syntrophotalea carbinolica (strain DSM 2380 / NBRC 103641 / GraBd1) (Pelobacter carbinolicus).